Consider the following 414-residue polypeptide: Histidine--tRNA ligase (414 aa).

Belongs to the class-II aminoacyl-tRNA synthetase family. In terms of assembly, homodimer.

It localises to the cytoplasm. The enzyme catalyses tRNA(His) + L-histidine + ATP = L-histidyl-tRNA(His) + AMP + diphosphate + H(+). The sequence is that of Histidine--tRNA ligase from Ehrlichia ruminantium (strain Gardel).